Consider the following 725-residue polypeptide: Fatty acid oxidation complex subunit alpha (725 aa).

The tract at residues 1-189 (MIYQGENLSV…ALGMIDGVVS (189 aa)) is enoyl-CoA hydratase/isomerase. Residue Asp296 participates in substrate binding. The interval 311–725 (EPVTSAAVLG…APQSLSAPSA (415 aa)) is 3-hydroxyacyl-CoA dehydrogenase. NAD(+)-binding positions include Met324, Asp343, 400 to 402 (VVE), Lys407, and Ser429. Catalysis depends on His450, which acts as the For 3-hydroxyacyl-CoA dehydrogenase activity. Asn453 provides a ligand contact to NAD(+). Residues Asn500 and Tyr660 each contribute to the substrate site.

It in the N-terminal section; belongs to the enoyl-CoA hydratase/isomerase family. In the C-terminal section; belongs to the 3-hydroxyacyl-CoA dehydrogenase family. As to quaternary structure, heterotetramer of two alpha chains (FadB) and two beta chains (FadA).

The enzyme catalyses a (3S)-3-hydroxyacyl-CoA + NAD(+) = a 3-oxoacyl-CoA + NADH + H(+). It catalyses the reaction a (3S)-3-hydroxyacyl-CoA = a (2E)-enoyl-CoA + H2O. The catalysed reaction is a 4-saturated-(3S)-3-hydroxyacyl-CoA = a (3E)-enoyl-CoA + H2O. It carries out the reaction (3S)-3-hydroxybutanoyl-CoA = (3R)-3-hydroxybutanoyl-CoA. The enzyme catalyses a (3Z)-enoyl-CoA = a 4-saturated (2E)-enoyl-CoA. It catalyses the reaction a (3E)-enoyl-CoA = a 4-saturated (2E)-enoyl-CoA. Its pathway is lipid metabolism; fatty acid beta-oxidation. Involved in the aerobic and anaerobic degradation of long-chain fatty acids via beta-oxidation cycle. Catalyzes the formation of 3-oxoacyl-CoA from enoyl-CoA via L-3-hydroxyacyl-CoA. It can also use D-3-hydroxyacyl-CoA and cis-3-enoyl-CoA as substrate. The protein is Fatty acid oxidation complex subunit alpha of Aliivibrio fischeri (strain MJ11) (Vibrio fischeri).